The sequence spans 327 residues: ATP-dependent 6-phosphofructokinase (327 aa).

Gly12 lines the ATP pocket. Residues 22–26 and 55–60 each bind ADP; these read RGVVR and RYSVSD. ATP is bound by residues 73–74 and 103–106; these read RF and GDGS. Mg(2+) is bound at residue Asp104. Residue 127-129 participates in substrate binding; the sequence is TID. The active-site Proton acceptor is the Asp129. Arg156 is a binding site for ADP. Substrate contacts are provided by residues Arg164 and 171 to 173; that span reads MGR. ADP-binding positions include 187 to 189, Lys213, and 215 to 217; these read GCE and KKH. Substrate is bound by residues Glu224, Arg245, and 251–254; that span reads HIQR.

It belongs to the phosphofructokinase type A (PFKA) family. ATP-dependent PFK group I subfamily. Prokaryotic clade 'B1' sub-subfamily. In terms of assembly, homotetramer. Mg(2+) is required as a cofactor.

The protein localises to the cytoplasm. It carries out the reaction beta-D-fructose 6-phosphate + ATP = beta-D-fructose 1,6-bisphosphate + ADP + H(+). It functions in the pathway carbohydrate degradation; glycolysis; D-glyceraldehyde 3-phosphate and glycerone phosphate from D-glucose: step 3/4. Allosterically activated by ADP and other diphosphonucleosides, and allosterically inhibited by phosphoenolpyruvate. Catalyzes the phosphorylation of D-fructose 6-phosphate to fructose 1,6-bisphosphate by ATP, the first committing step of glycolysis. The protein is ATP-dependent 6-phosphofructokinase of Yersinia pseudotuberculosis serotype O:1b (strain IP 31758).